A 969-amino-acid chain; its full sequence is Leucine--tRNA ligase (969 aa).

The tract at residues 1–23 is disordered; sequence MTESPTTSPATGSGAAAPDSDAP. Residues 78–89 carry the 'HIGH' region motif; that stretch reads PYPSGEGLHVGH. The 'KMSKS' region signature appears at 737–741; the sequence is KIGKS. An ATP-binding site is contributed by lysine 740.

This sequence belongs to the class-I aminoacyl-tRNA synthetase family.

It localises to the cytoplasm. The catalysed reaction is tRNA(Leu) + L-leucine + ATP = L-leucyl-tRNA(Leu) + AMP + diphosphate. The sequence is that of Leucine--tRNA ligase from Mycolicibacterium paratuberculosis (strain ATCC BAA-968 / K-10) (Mycobacterium paratuberculosis).